Consider the following 1309-residue polypeptide: Putative receptor-type tyrosine-protein phosphatase mosPTP-1 (1309 aa).

The N-terminal stretch at 1 to 36 (MNSAPRNAGAARSVDRRGFIAACGLLVLLVVRMLGA) is a signal peptide. Topologically, residues 37-572 (ADATRIFDIE…RQVYDDYNLA (536 aa)) are extracellular. N-linked (GlcNAc...) asparagine glycosylation is found at Asn-60, Asn-107, Asn-162, Asn-257, Asn-353, Asn-389, Asn-455, Asn-501, and Asn-513. 4 consecutive Fibronectin type-III domains span residues 147–244 (PPGR…TLRE), 249–347 (KPVT…DEGV), 350–449 (KPLN…SGPS), and 450–553 (APKV…LQLH). The chain crosses the membrane as a helical span at residues 573–593 (VLGGIVFSCFGLLLIVLSFLL). Over 594 to 1309 (WKKCFHAAYY…NHLNLDHNQS (716 aa)) the chain is Cytoplasmic. 2 consecutive Tyrosine-protein phosphatase domains span residues 656–921 (FSKE…LVEA) and 944–1196 (IDNQ…LSYM). Cys-862 acts as the Phosphocysteine intermediate in catalysis. Positions 1239–1269 (NSGDGGGNGNDGVPTGNGTNGGLPMSGGGTT) are disordered. The span at 1256–1268 (GTNGGLPMSGGGT) shows a compositional bias: gly residues.

It belongs to the protein-tyrosine phosphatase family. Receptor class subfamily. As to quaternary structure, interacts with C-type lectin mosGCTL-1; the interaction probably mediates the recruitment of West Nile virus particles in complex with C-type lectin mosGCTL-1 to the cell surface. Interacts with C-type lectin mosGCTL-7; the interaction probably mediates the recruitment of Japanese encephalitis virus particles in complex with C-type lectin mosGCTL-7 to the cell surface. In terms of tissue distribution, salivary gland (at protein level). Hemolymph. Low-level expression in midgut.

Its subcellular location is the cell membrane. The enzyme catalyses O-phospho-L-tyrosyl-[protein] + H2O = L-tyrosyl-[protein] + phosphate. Functionally, putative protein tyrosine-protein phosphatase. (Microbial infection) Facilitates West Nile virus infection in mosquitoes probably via recruiting West Nile virus particles in complex with C-type lectin mosGCTL-1 to the cell surface. In terms of biological role, (Microbial infection) Facilitates Japanese encephalitis virus infection in mosquitoes probably via recruiting Japanese encephalitis virus particles in complex with C-type lectin mosGCTL-7 to the cell surface. The polypeptide is Putative receptor-type tyrosine-protein phosphatase mosPTP-1 (Aedes aegypti (Yellowfever mosquito)).